The chain runs to 237 residues: ATP synthase subunit 4, mitochondrial (237 aa).

The N-terminal 30 residues, 1 to 30 (MFRALTLKASARPVVAGLCSRQAPIAAVRY), are a transit peptide targeting the mitochondrion.

The protein belongs to the eukaryotic ATPase B chain family.

The protein resides in the mitochondrion. It localises to the mitochondrion inner membrane. Its function is as follows. Mitochondrial membrane ATP synthase (F(1)F(0) ATP synthase or Complex V) produces ATP from ADP in the presence of a proton gradient across the membrane which is generated by electron transport complexes of the respiratory chain. F-type ATPases consist of two structural domains, F(1) - containing the extramembraneous catalytic core, and F(0) - containing the membrane proton channel, linked together by a central stalk and a peripheral stalk. During catalysis, ATP synthesis in the catalytic domain of F(1) is coupled via a rotary mechanism of the central stalk subunits to proton translocation. Part of the complex F(0) domain and the peripheric stalk, which acts as a stator to hold the catalytic alpha(3)beta(3) subcomplex and subunit a/ATP6 static relative to the rotary elements. The chain is ATP synthase subunit 4, mitochondrial (ATP4) from Kluyveromyces lactis (strain ATCC 8585 / CBS 2359 / DSM 70799 / NBRC 1267 / NRRL Y-1140 / WM37) (Yeast).